The chain runs to 173 residues: Protein tyrosine phosphatase type IVA 3 (173 aa).

Residues 8 to 161 (APVEVSYKNM…YRPKQRLRFK (154 aa)) enclose the Tyrosine-protein phosphatase domain. An intrachain disulfide couples cysteine 49 to cysteine 104. Aspartate 72 functions as the Proton donor in the catalytic mechanism. The active-site Phosphocysteine intermediate is the cysteine 104. Arginine 110 contributes to the substrate binding site. Cysteine 170 is subject to Cysteine methyl ester. A lipid anchor (S-farnesyl cysteine) is attached at cysteine 170. The propeptide at 171–173 (CIM) is removed in mature form.

It belongs to the protein-tyrosine phosphatase family. In terms of assembly, interacts with tubulin. In terms of processing, farnesylated. Farnesylation is required for membrane targeting. Unfarnesylated forms are shifted into the nucleus.

The protein localises to the cell membrane. The protein resides in the early endosome. It carries out the reaction O-phospho-L-tyrosyl-[protein] + H2O = L-tyrosyl-[protein] + phosphate. Its activity is regulated as follows. Inhibited by sodium orthovanadate and peroxovanadium compounds, and by pentamidine. Functionally, protein tyrosine phosphatase which stimulates progression from G1 into S phase during mitosis. Enhances cell proliferation, cell motility and invasive activity, and promotes cancer metastasis. May be involved in the progression of cardiac hypertrophy by inhibiting intracellular calcium mobilization in response to angiotensin II. In Bos taurus (Bovine), this protein is Protein tyrosine phosphatase type IVA 3 (PTP4A3).